Consider the following 510-residue polypeptide: NAD(P)H-quinone oxidoreductase subunit 2, chloroplastic (510 aa).

Transmembrane regions (helical) follow at residues 24–44, 59–79, 99–119, 124–144, 149–169, 183–203, 229–249, 295–315, 323–343, 354–374, 395–415, 418–438, and 484–504; these read LLLF…GLIL, WFYF…LFRW, IFQF…VEYI, MAIT…MFLC, LITI…LSGY, YLLM…WLYG, ISIA…PAPF, WHLL…LIAI, MLAY…IVGD, YMLF…SFGL, ALSL…AGFF, LYLF…MGLL, and MTVC…ILAI.

This sequence belongs to the complex I subunit 2 family. As to quaternary structure, NDH is composed of at least 16 different subunits, 5 of which are encoded in the nucleus.

The protein localises to the plastid. It localises to the chloroplast thylakoid membrane. It catalyses the reaction a plastoquinone + NADH + (n+1) H(+)(in) = a plastoquinol + NAD(+) + n H(+)(out). The enzyme catalyses a plastoquinone + NADPH + (n+1) H(+)(in) = a plastoquinol + NADP(+) + n H(+)(out). NDH shuttles electrons from NAD(P)H:plastoquinone, via FMN and iron-sulfur (Fe-S) centers, to quinones in the photosynthetic chain and possibly in a chloroplast respiratory chain. The immediate electron acceptor for the enzyme in this species is believed to be plastoquinone. Couples the redox reaction to proton translocation, and thus conserves the redox energy in a proton gradient. This Sisyrinchium montanum (Strict blue-eyed grass) protein is NAD(P)H-quinone oxidoreductase subunit 2, chloroplastic.